The sequence spans 382 residues: Dual-specificity RNA methyltransferase RlmN (382 aa).

Glu94 acts as the Proton acceptor in catalysis. The region spanning 100 to 336 (EANRGTLCVS…NTITRKTRGD (237 aa)) is the Radical SAM core domain. Cys107 and Cys342 are oxidised to a cystine. [4Fe-4S] cluster contacts are provided by Cys114, Cys118, and Cys121. Residues 168–169 (GE), Ser200, 222–224 (SLH), and Asn299 each bind S-adenosyl-L-methionine. The S-methylcysteine intermediate role is filled by Cys342.

The protein belongs to the radical SAM superfamily. RlmN family. [4Fe-4S] cluster is required as a cofactor.

The protein resides in the cytoplasm. The enzyme catalyses adenosine(2503) in 23S rRNA + 2 reduced [2Fe-2S]-[ferredoxin] + 2 S-adenosyl-L-methionine = 2-methyladenosine(2503) in 23S rRNA + 5'-deoxyadenosine + L-methionine + 2 oxidized [2Fe-2S]-[ferredoxin] + S-adenosyl-L-homocysteine. The catalysed reaction is adenosine(37) in tRNA + 2 reduced [2Fe-2S]-[ferredoxin] + 2 S-adenosyl-L-methionine = 2-methyladenosine(37) in tRNA + 5'-deoxyadenosine + L-methionine + 2 oxidized [2Fe-2S]-[ferredoxin] + S-adenosyl-L-homocysteine. In terms of biological role, specifically methylates position 2 of adenine 2503 in 23S rRNA and position 2 of adenine 37 in tRNAs. m2A2503 modification seems to play a crucial role in the proofreading step occurring at the peptidyl transferase center and thus would serve to optimize ribosomal fidelity. The chain is Dual-specificity RNA methyltransferase RlmN from Legionella pneumophila (strain Paris).